The chain runs to 154 residues: Endoribonuclease YbeY (154 aa).

Zn(2+) is bound by residues histidine 114, histidine 118, and histidine 124.

The protein belongs to the endoribonuclease YbeY family. The cofactor is Zn(2+).

It is found in the cytoplasm. Single strand-specific metallo-endoribonuclease involved in late-stage 70S ribosome quality control and in maturation of the 3' terminus of the 16S rRNA. The protein is Endoribonuclease YbeY of Histophilus somni (strain 2336) (Haemophilus somnus).